The sequence spans 127 residues: uncharacterized protein (127 aa).

This is an uncharacterized protein from Pasteurella multocida (strain Pm70).